A 186-amino-acid polypeptide reads, in one-letter code: Photosystem I assembly protein Ycf4 (186 aa).

Transmembrane regions (helical) follow at residues 22–42 (FCWA…GTSS) and 57–77 (IIFF…LFIS).

The protein belongs to the Ycf4 family.

It is found in the plastid. The protein resides in the chloroplast thylakoid membrane. Seems to be required for the assembly of the photosystem I complex. This is Photosystem I assembly protein Ycf4 from Vitis vinifera (Grape).